The primary structure comprises 116 residues: MSFSEQQCKQPCVPPPCLPKTQEQCQAKAEEVCLPTCQHPCQDKCLVQAQEVCLSQCQESSQEKCPQQGQEPYLPPCQDQCPPQCAEPCQELFQTKCVEVCPQKVQEKCSSPGKGK.

The sequence is that of Proline-rich protein 9 (PRR9) from Homo sapiens (Human).